Consider the following 22-residue polypeptide: Peptide PGLa-R1 (22 aa).

L22 is subject to Leucine amide.

Expressed by the skin glands.

The protein localises to the secreted. Antimicrobial peptide. This Xenopus ruwenzoriensis (Uganda clawed frog) protein is Peptide PGLa-R1.